Consider the following 158-residue polypeptide: SsrA-binding protein (158 aa).

This sequence belongs to the SmpB family.

The protein resides in the cytoplasm. In terms of biological role, required for rescue of stalled ribosomes mediated by trans-translation. Binds to transfer-messenger RNA (tmRNA), required for stable association of tmRNA with ribosomes. tmRNA and SmpB together mimic tRNA shape, replacing the anticodon stem-loop with SmpB. tmRNA is encoded by the ssrA gene; the 2 termini fold to resemble tRNA(Ala) and it encodes a 'tag peptide', a short internal open reading frame. During trans-translation Ala-aminoacylated tmRNA acts like a tRNA, entering the A-site of stalled ribosomes, displacing the stalled mRNA. The ribosome then switches to translate the ORF on the tmRNA; the nascent peptide is terminated with the 'tag peptide' encoded by the tmRNA and targeted for degradation. The ribosome is freed to recommence translation, which seems to be the essential function of trans-translation. This chain is SsrA-binding protein, found in Saccharopolyspora erythraea (strain ATCC 11635 / DSM 40517 / JCM 4748 / NBRC 13426 / NCIMB 8594 / NRRL 2338).